A 178-amino-acid chain; its full sequence is Small ribosomal subunit protein uS5 (178 aa).

An S5 DRBM domain is found at 17–80 (FEERIVEIRR…AAARASVVEI (64 aa)).

This sequence belongs to the universal ribosomal protein uS5 family. In terms of assembly, part of the 30S ribosomal subunit. Contacts proteins S4 and S8.

In terms of biological role, with S4 and S12 plays an important role in translational accuracy. Functionally, located at the back of the 30S subunit body where it stabilizes the conformation of the head with respect to the body. The sequence is that of Small ribosomal subunit protein uS5 from Pseudothermotoga lettingae (strain ATCC BAA-301 / DSM 14385 / NBRC 107922 / TMO) (Thermotoga lettingae).